The following is a 385-amino-acid chain: Transmembrane protein 271 (385 aa).

The next 2 helical transmembrane spans lie at 9 to 29 (CAAL…AVGL) and 50 to 70 (GAFY…AALL). The disordered stretch occupies residues 83–111 (EPGPGLGVPAAPAGAPEATPGESGAAAGA). A helical membrane pass occupies residues 121-141 (LLLGVLVFMLGVLSAFAGAVI). Positions 160 to 203 (PRAPGSSPGSAPGSTPGSAPGSAPGSAPGSAPGAPRARSTLDSA) are disordered. The span at 163-197 (PGSSPGSAPGSTPGSAPGSAPGSAPGSAPGAPRAR) shows a compositional bias: low complexity. A helical membrane pass occupies residues 219–239 (VLSTVFNSLECLLGLLSLLLV). The disordered stretch occupies residues 245–305 (SQARRGRRGR…SEASILSPEE (61 aa)). A compositionally biased stretch (basic residues) spans 246–258 (QARRGRRGRRRGG). The span at 259–277 (RALARPRGGSGLRAQPPAS) shows a compositional bias: low complexity. Over residues 278-292 (RARRGRRGRRGRRLQ) the composition is skewed to basic residues.

Its subcellular location is the membrane. This Homo sapiens (Human) protein is Transmembrane protein 271.